The primary structure comprises 239 residues: MKNKRSQNSPYVTPNNPYTTLEKALGYSFKDKRLLEQALTHKSCKLALNNERLEFLGDAVLGLVIGELLYHKFYQYDEGKLSKLRAAIVSAHGFTKLAKAIALQDYLRVSSSEEISKGREKPSILSSAFEALMAGVYLEAGLAKVRKIIQNLLNRAYKRLDLEHLFMDYKTALQELTQAQFCVIPTYQLLQEKGPDHHKEFEMALYIQDKMYATAKGKSKKEAEQQCAYYALQKLKEAK.

In terms of domain architecture, RNase III spans Tyr18–Gly141. A Mg(2+)-binding site is contributed by Glu54. Asp58 is an active-site residue. Positions 127 and 130 each coordinate Mg(2+). The active site involves Glu130. The 70-residue stretch at Asp168–Glu237 folds into the DRBM domain.

Belongs to the ribonuclease III family. Homodimer. Mg(2+) serves as cofactor.

The protein resides in the cytoplasm. It carries out the reaction Endonucleolytic cleavage to 5'-phosphomonoester.. Digests double-stranded RNA. Involved in the processing of primary rRNA transcript to yield the immediate precursors to the large and small rRNAs (23S and 16S). Processes some mRNAs, and tRNAs when they are encoded in the rRNA operon. Processes pre-crRNA and tracrRNA of type II CRISPR loci if present in the organism. This is Ribonuclease 3 from Helicobacter pylori (strain G27).